The chain runs to 788 residues: MLNSVKKLLGDSQKRKLKKYEQLVQEINNLEEKLSDLSDEELRHKTITFKDMLRDGKTVDDIKVEAFAVVREAAKRVLGLRHYDVQLIGGLVLLEGNIAEMPTGEGKTLVSSLPTYVRALEGKGVHVITVNDYLAKRDKELIGQVHEFLGLKVGLNIPQIDPFEKKLAYEADITYGIGTEFGFDYLRDNMAASKNEQVQRPYHFAIIDEIDSVLIDEAKTPLIIAGKKSSSSDLHYLCAKVIKSFQDTLHYTYDAESKSASFTEDGIIKIEDLFDIDNLYDLEHQTLYHYMIQALRAHVAFQCDVDYIVHDEKILLVDIFTGRVMDGRSLSDGLHQALEAKEGLEITEENQTQASITIQNFFRMYPALSGMTGTAKTEEKEFNRVYNMEVIPIPTNRPIIREDKKDVVYVTADAKYKAVREDVLKHNKQGRPILIGTMSILQSETVARYLDEANITYQLLNAKSAEQEADLIATAGQKGQITIATNMAGRGTDILLGEGVHELGGLHVIGTERHESRRVDNQLKGRAGRQGDPGSSQFFLSLEDEMLKRFAQEEVEKLTKSLKTDETGLILTAKVHDFVNRTQLICEGSHFSMREYNLKLDDVINDQRNVIYKLRNNLLQEDTNMIEIIIPMIDHAVEAISKQYLVEGMLPEEWDFASLTASLNEILSVENMPSLSANNVHSPEDLQSVLKETLSLYKERVNELDSHTDLQQSLRYVALHFLDQNWVNHLDAMTHLKEGIGLRQYQQEDPTRLYQKEALDIFLYTYGNFEKEMCRYVARHLGVPENVQ.

Residues glutamine 86, 104–108 (GEGKT), and aspartate 493 each bind ATP.

This sequence belongs to the SecA family. As to quaternary structure, monomer and homodimer. Part of the essential Sec protein translocation apparatus which comprises SecA, SecYEG and auxiliary proteins SecDF. Other proteins may also be involved.

It localises to the cell membrane. It is found in the cytoplasm. It carries out the reaction ATP + H2O + cellular proteinSide 1 = ADP + phosphate + cellular proteinSide 2.. Its function is as follows. Part of the Sec protein translocase complex. Interacts with the SecYEG preprotein conducting channel. Has a central role in coupling the hydrolysis of ATP to the transfer of proteins into and across the cell membrane, serving as an ATP-driven molecular motor driving the stepwise translocation of polypeptide chains across the membrane. This is Protein translocase subunit SecA 2 from Bacillus thuringiensis (strain Al Hakam).